Consider the following 276-residue polypeptide: Probable endonuclease 4 (276 aa).

Zn(2+)-binding residues include H70, H108, E143, D176, H179, H210, D223, H225, and E255.

The protein belongs to the AP endonuclease 2 family. It depends on Zn(2+) as a cofactor.

It carries out the reaction Endonucleolytic cleavage to 5'-phosphooligonucleotide end-products.. Its function is as follows. Endonuclease IV plays a role in DNA repair. It cleaves phosphodiester bonds at apurinic or apyrimidinic (AP) sites, generating a 3'-hydroxyl group and a 5'-terminal sugar phosphate. The chain is Probable endonuclease 4 from Mesomycoplasma hyopneumoniae (strain J / ATCC 25934 / NCTC 10110) (Mycoplasma hyopneumoniae).